The primary structure comprises 577 residues: Protein downstream neighbor of son homolog (577 aa).

2 disordered regions span residues 1–67 (MAEL…KRRN) and 328–382 (FTQP…LEEM). The span at 362–375 (ETDEVSDESDEDES) shows a compositional bias: acidic residues.

It belongs to the DONSON family. In terms of assembly, component of the replisome complex.

The protein resides in the nucleus. In terms of biological role, replisome component that maintains genome stability by protecting stalled or damaged replication forks. After the induction of replication stress, required for the stabilization of stalled replication forks, the efficient activation of the intra-S-phase and G/2M cell-cycle checkpoints and the maintenance of genome stability. This chain is Protein downstream neighbor of son homolog, found in Xenopus tropicalis (Western clawed frog).